Here is a 398-residue protein sequence, read N- to C-terminus: Argininosuccinate synthase (398 aa).

Residue 8-16 (AYSGGLDTS) coordinates ATP. Position 87 (Tyr-87) interacts with L-citrulline. Position 117 (Gly-117) interacts with ATP. L-aspartate-binding residues include Thr-119, Asn-123, and Asp-124. Asn-123 contacts L-citrulline. 4 residues coordinate L-citrulline: Arg-127, Ser-175, Glu-260, and Tyr-272.

The protein belongs to the argininosuccinate synthase family. Type 1 subfamily. In terms of assembly, homotetramer.

The protein localises to the cytoplasm. It carries out the reaction L-citrulline + L-aspartate + ATP = 2-(N(omega)-L-arginino)succinate + AMP + diphosphate + H(+). It functions in the pathway amino-acid biosynthesis; L-arginine biosynthesis; L-arginine from L-ornithine and carbamoyl phosphate: step 2/3. This chain is Argininosuccinate synthase, found in Mycobacterium avium (strain 104).